Reading from the N-terminus, the 124-residue chain is Small ribosomal subunit protein uS12 (124 aa).

A 3-methylthioaspartic acid modification is found at aspartate 89.

This sequence belongs to the universal ribosomal protein uS12 family. As to quaternary structure, part of the 30S ribosomal subunit. Contacts proteins S8 and S17. May interact with IF1 in the 30S initiation complex.

Functionally, with S4 and S5 plays an important role in translational accuracy. In terms of biological role, interacts with and stabilizes bases of the 16S rRNA that are involved in tRNA selection in the A site and with the mRNA backbone. Located at the interface of the 30S and 50S subunits, it traverses the body of the 30S subunit contacting proteins on the other side and probably holding the rRNA structure together. The combined cluster of proteins S8, S12 and S17 appears to hold together the shoulder and platform of the 30S subunit. The polypeptide is Small ribosomal subunit protein uS12 (Acinetobacter baylyi (strain ATCC 33305 / BD413 / ADP1)).